Consider the following 1457-residue polypeptide: Ras guanine nucleotide exchange factor C (1457 aa).

The RCC1 1 repeat unit spans residues 1–55 (MSVFTFGHGSNGALGLGKITDDTCPTPQKVNYFTEIDKRVKKVACGSYHTVFVTD). 4 disordered regions span residues 75–196 (FYTS…PLLN), 209–264 (HYES…RINK), 282–313 (EQQQ…DEDP), and 376–404 (QQQL…SLQT). Composition is skewed to low complexity over residues 83–121 (TTTT…KIVN) and 134–158 (SNTT…LPPT). Composition is skewed to basic and acidic residues over residues 171-188 (IKLD…ELIQ) and 209-224 (HYES…KDNE). Residues 225–237 (NENEEDEDDDDDD) are compositionally biased toward acidic residues. Basic and acidic residues predominate over residues 238–249 (STIRQNEDKESS). Composition is skewed to low complexity over residues 283–292 (QQQQPQQPQQ) and 376–403 (QQQL…SSLQ). 4 RCC1 repeats span residues 351-401 (GGNV…SSSS), 432-483 (WGEL…CYTE), 485-549 (GKMY…VLTQ), and 590-647 (SGEV…ALVE). Positions 650 to 971 (PKTKLALQLV…QVLLERMNQN (322 aa)) constitute a DH domain. Over residues 703–715 (LPPSLKGLSGGLP) the composition is skewed to low complexity. The tract at residues 703-762 (LPPSLKGLSGGLPDNANNTIKNGKDKDNHHNGDSNGHHSNGHYHGNGNNGNNSITTSNSI) is disordered. A compositionally biased stretch (basic and acidic residues) spans 724–738 (NGKDKDNHHNGDSNG). The span at 739 to 762 (HHSNGHYHGNGNNGNNSITTSNSI) shows a compositional bias: low complexity. The 121-residue stretch at 989 to 1109 (GNPQIMGGSL…SVSQIKLQYF (121 aa)) folds into the N-terminal Ras-GEF domain. The interval 1127 to 1210 (LTQNEITTPP…NNNNNNNNLT (84 aa)) is disordered. Residues 1138–1211 (LQIQNNNQNN…NNNNNNNLTN (74 aa)) adopt a coiled-coil conformation. A compositionally biased stretch (low complexity) spans 1142–1210 (NNNQNNNLEN…NNNNNNNNLT (69 aa)). Positions 1232–1454 (QPIEVAQTLT…DDKQAQKISS (223 aa)) constitute a Ras-GEF domain.

Its function is as follows. Promotes the exchange of Ras-bound GDP by GTP. This Dictyostelium discoideum (Social amoeba) protein is Ras guanine nucleotide exchange factor C (gefC).